A 445-amino-acid chain; its full sequence is Xylose isomerase (445 aa).

Residues H99 and D102 contribute to the active site. The Mg(2+) site is built by E230, E266, H269, D294, D305, D307, and D337.

The protein belongs to the xylose isomerase family. As to quaternary structure, homotetramer. Requires Mg(2+) as cofactor.

The protein localises to the cytoplasm. The catalysed reaction is alpha-D-xylose = alpha-D-xylulofuranose. The polypeptide is Xylose isomerase (Geobacillus kaustophilus (strain HTA426)).